Here is a 183-residue protein sequence, read N- to C-terminus: GTP cyclohydrolase 1 (183 aa).

Positions 71, 74, and 142 each coordinate Zn(2+).

Belongs to the GTP cyclohydrolase I family. In terms of assembly, homomer.

The enzyme catalyses GTP + H2O = 7,8-dihydroneopterin 3'-triphosphate + formate + H(+). Its pathway is cofactor biosynthesis; 7,8-dihydroneopterin triphosphate biosynthesis; 7,8-dihydroneopterin triphosphate from GTP: step 1/1. In Leptospira biflexa serovar Patoc (strain Patoc 1 / Ames), this protein is GTP cyclohydrolase 1.